Consider the following 966-residue polypeptide: Regulator of telomere elongation helicase 1 homolog (966 aa).

One can recognise a Helicase ATP-binding domain in the interval 7–284 (AGIPVHFPFE…QDMAGDEPKD (278 aa)). Residue 42–49 (SPTGTGKT) coordinates ATP. Positions 146, 164, 173, and 209 each coordinate [4Fe-4S] cluster. Positions 233-236 (DEAH) match the DEAH box motif. A disordered region spans residues 844–864 (VKIHKRERSSPTAPESTSQVS). Polar residues predominate over residues 853-863 (SPTAPESTSQV). Thr-855 carries the phosphothreonine modification.

The protein belongs to the helicase family. RAD3/XPD subfamily.

It localises to the nucleus. The enzyme catalyses ATP + H2O = ADP + phosphate + H(+). Its function is as follows. A probable ATP-dependent DNA helicase implicated in DNA repair and the maintenance of genomic stability. Acts as an anti-recombinase to counteract toxic recombination and limit crossover during meiosis. Regulates meiotic recombination and crossover homeostasis by physically dissociating strand invasion events and thereby promotes noncrossover repair by meiotic synthesis dependent strand annealing (SDSA) as well as disassembly of D loop recombination intermediates. This is Regulator of telomere elongation helicase 1 homolog from Drosophila sechellia (Fruit fly).